The following is a 387-amino-acid chain: Zinc transporter 7 (387 aa).

Residues 1 to 37 (MLPLSIKDDEYKPAKFNLVVKLSGWFRSILADKTSRN) lie on the Cytoplasmic side of the membrane. Residues 38–58 (LFFFLCLNLSFAFVELLYGIW) traverse the membrane as a helical segment. Residues 59–67 (SNSLGLISD) are Lumenal-facing. Residues 68-88 (SFHMFFDCTALLAGLAASVIS) form a helical membrane-spanning segment. At 89–102 (RWRSNDSFSYGYVR) the chain is on the cytoplasmic side. The chain crosses the membrane as a helical span at residues 103–123 (AEVLAGFVNGLFLIFTAFFIF). The Lumenal portion of the chain corresponds to 124–140 (SEGVERALEPPDVHHDR). A helical transmembrane segment spans residues 141 to 161 (LLPVSIAGLLVNLVGIFVFQH). The his-rich loop stretch occupies residues 161–232 (HGGHGHSHGG…HDDQHCHDDH (72 aa)). Residues 162 to 247 (GGHGHSHGGD…KGSSKQILQG (86 aa)) are Cytoplasmic-facing. Positions 167–237 (SHGGDDHGHS…CHDDHTLTPG (71 aa)) are disordered. Residues 187-201 (GHSHGGHGHSHGGHG) show a composition bias toward basic residues. 2 stretches are compositionally biased toward basic and acidic residues: residues 202 to 214 (HSHESKHGHDHGH) and 221 to 233 (HSHDDQHCHDDHT). Residues 248–268 (VFLHIVADTLGSVGVIISAIL) traverse the membrane as a helical segment. Residues 269-273 (MQKYD) lie on the Lumenal side of the membrane. Residues 274-294 (LMIADPICSMLIALLIGVSVV) form a helical membrane-spanning segment. Residues 295–387 (PLLRESIGIL…LYVQIEVAAM (93 aa)) are Cytoplasmic-facing.

It belongs to the cation diffusion facilitator (CDF) transporter (TC 2.A.4) family. SLC30A subfamily. In terms of assembly, homooligomer.

Its subcellular location is the golgi apparatus membrane. It localises to the cytoplasmic vesicle. It is found in the golgi apparatus. The protein localises to the trans-Golgi network. The protein resides in the sarcoplasmic reticulum. Its subcellular location is the mitochondrion. The enzyme catalyses Zn(2+)(in) = Zn(2+)(out). In terms of biological role, zinc ion transporter mediating zinc entry from the cytosol into the lumen of organelles along the secretory pathway. By contributing to zinc ion homeostasis within the early secretory pathway, regulates the activation and folding of enzymes like alkaline phosphatases. This is Zinc transporter 7 (slc30a7) from Danio rerio (Zebrafish).